The primary structure comprises 485 residues: Pumilio domain-containing protein 6 (485 aa).

Disordered stretches follow at residues 29–48 (NKTH…PYRH) and 55–76 (SDLD…TPPP). Over residues 55–68 (SDLDNYIFNSGSGS) the composition is skewed to polar residues. 8 Pumilio repeats span residues 86 to 124 (EVLL…AVFE), 125 to 163 (KLTE…ELLR), 164 to 200 (QMID…QLIQ), 201 to 236 (ELST…TFFV), 237 to 279 (HFLS…FRIQ), 287 to 324 (CIVR…TIID), 326 to 361 (CLLR…EMME), and 372 to 411 (ELNR…RQLP). The tract at residues 439–454 (FSSGKKIIDSVMRHGV) is RNA-binding.

Its function is as follows. RNA-binding protein that binds to the consensus sequence 5'-CUCUGUAUCUUGU-3' in mRNA 3'-UTRs and modulates mRNA expression and stability. Functions redundantly with puf-5 and puf-7 in oocyte formation and organization, early embryonic cell divisions, and repression of expression of glp-1 and other maternal mRNAs in late oogenesis. The sequence is that of Pumilio domain-containing protein 6 from Caenorhabditis elegans.